Consider the following 385-residue polypeptide: Glucose-fructose oxidoreductase domain-containing protein 2 (385 aa).

Residues 1–25 (MKMLPGVGVFGTGSSARVLVPLLRA) form the signal peptide.

Belongs to the Gfo/Idh/MocA family.

It is found in the secreted. The protein resides in the extracellular space. The protein localises to the extracellular matrix. In terms of biological role, promotes matrix assembly. This is Glucose-fructose oxidoreductase domain-containing protein 2 (GFOD2) from Bos taurus (Bovine).